The chain runs to 142 residues: Large ribosomal subunit protein uL13 (142 aa).

Belongs to the universal ribosomal protein uL13 family. Part of the 50S ribosomal subunit.

Its function is as follows. This protein is one of the early assembly proteins of the 50S ribosomal subunit, although it is not seen to bind rRNA by itself. It is important during the early stages of 50S assembly. This is Large ribosomal subunit protein uL13 from Yersinia pseudotuberculosis serotype O:1b (strain IP 31758).